A 348-amino-acid chain; its full sequence is Nicotinate-nucleotide--dimethylbenzimidazole phosphoribosyltransferase (348 aa).

Catalysis depends on Glu317, which acts as the Proton acceptor.

This sequence belongs to the CobT family.

The enzyme catalyses 5,6-dimethylbenzimidazole + nicotinate beta-D-ribonucleotide = alpha-ribazole 5'-phosphate + nicotinate + H(+). The protein operates within nucleoside biosynthesis; alpha-ribazole biosynthesis; alpha-ribazole from 5,6-dimethylbenzimidazole: step 1/2. In terms of biological role, catalyzes the synthesis of alpha-ribazole-5'-phosphate from nicotinate mononucleotide (NAMN) and 5,6-dimethylbenzimidazole (DMB). The chain is Nicotinate-nucleotide--dimethylbenzimidazole phosphoribosyltransferase from Clostridioides difficile (strain 630) (Peptoclostridium difficile).